The following is a 249-amino-acid chain: MALSKIAALSTILASASLVAGHGYVSSIVANGQNYTGYLADSYPYMSNPPKSVGWATTATDLGFEDGTEYADPNIICHRNGTNAQLSAPVQAGSKVEIQWTPWPDSHHGPVITYLASCNGDCSTVDKSTLEFFKIDAVGLIDDSSVPGTWGTDKLIEAGNRWTVTIPDSIAAGNYVMRHEIIALHSASQKDGAQNYPQCLNLQVTGGGEGVPQGTLGEKLYKDTDPGILVNIYTTLSNYVIPGPALYSG.

The first 21 residues, 1–21 (MALSKIAALSTILASASLVAG), serve as a signal peptide directing secretion. H22 contacts Cu(2+). Position 22 is a methylhistidine (H22). N-linked (GlcNAc...) asparagine glycans are attached at residues N34 and N80. 2 disulfide bridges follow: C77/C199 and C118/C122. Position 107 (H107) interacts with Cu(2+). H185 and Q194 together coordinate O2. Y196 lines the Cu(2+) pocket.

The protein belongs to the polysaccharide monooxygenase AA9 family. The cofactor is Cu(2+). In terms of processing, the catalytically essential N-terminal histidine His-22 is post-translationally modified by methylation to prevent protonation of the histidine side chain, and protect the critical active site of the enzyme from oxidative damage.

Its subcellular location is the secreted. The enzyme catalyses [(1-&gt;4)-beta-D-glucosyl]n+m + reduced acceptor + O2 = 4-dehydro-beta-D-glucosyl-[(1-&gt;4)-beta-D-glucosyl]n-1 + [(1-&gt;4)-beta-D-glucosyl]m + acceptor + H2O.. Its function is as follows. Lytic polysaccharide monooxygenase (LPMO) that exhibits a mixed C1/C4 oxidative cleavage activity on cellulose and xyloglucan. Catalysis by LPMOs requires the reduction of the active-site copper from Cu(II) to Cu(I) by a reducing agent and H(2)O(2) or O(2) as a cosubstrate. Shows a higher boosting effect with cellulases on the enzymatic saccharification of complex lignocellulosic substrates associated with xyloglucan than on the lignocellulosic substrates without xyloglucan. The oxidative cleavage of xyloglucan by LPMO9A may facilitate to open up the sterical hindrance of cellulose by xyloglucan and thereby increase accessibility for cellulase to lignocellulosic substrates. The chain is AA9 family lytic polysaccharide monooxygenase A from Penicillium parvum (Eupenicillium parvum).